The primary structure comprises 44 residues: Photosystem I reaction center subunit IX (44 aa).

The helical transmembrane segment at 9 to 29 (FMRSAPIVAAIWISLTAGIII) threads the bilayer.

This sequence belongs to the PsaJ family.

It is found in the cellular thylakoid membrane. Its function is as follows. May help in the organization of the PsaE and PsaF subunits. The polypeptide is Photosystem I reaction center subunit IX (Prochlorococcus marinus (strain MIT 9515)).